Consider the following 379-residue polypeptide: S-adenosylmethionine decarboxylase proenzyme (379 aa).

Catalysis depends on residues glutamate 30 and glutamate 33. The Schiff-base intermediate with substrate; via pyruvic acid role is filled by serine 96. Serine 96 carries the post-translational modification Pyruvic acid (Ser); by autocatalysis. Cysteine 110 (proton donor; for catalytic activity) is an active-site residue. Active-site proton acceptor; for processing activity residues include serine 254 and histidine 267.

This sequence belongs to the eukaryotic AdoMetDC family. As to quaternary structure, heterotetramer of two alpha and two beta chains. Requires pyruvate as cofactor. Post-translationally, is synthesized initially as an inactive proenzyme. Formation of the active enzyme involves a self-maturation process in which the active site pyruvoyl group is generated from an internal serine residue via an autocatalytic post-translational modification. Two non-identical subunits are generated from the proenzyme in this reaction, and the pyruvate is formed at the N-terminus of the alpha chain, which is derived from the carboxyl end of the proenzyme. The post-translation cleavage follows an unusual pathway, termed non-hydrolytic serinolysis, in which the side chain hydroxyl group of the serine supplies its oxygen atom to form the C-terminus of the beta chain, while the remainder of the serine residue undergoes an oxidative deamination to produce ammonia and the pyruvoyl group blocking the N-terminus of the alpha chain.

The enzyme catalyses S-adenosyl-L-methionine + H(+) = S-adenosyl 3-(methylsulfanyl)propylamine + CO2. It participates in amine and polyamine biosynthesis; S-adenosylmethioninamine biosynthesis; S-adenosylmethioninamine from S-adenosyl-L-methionine: step 1/1. In terms of biological role, S-adenosylmethionine decarboxylase is essential for the biosynthesis of spermine and spermidine. The alpha subunit contains the active site. The sequence is that of S-adenosylmethionine decarboxylase proenzyme (amd1) from Dictyostelium discoideum (Social amoeba).